A 172-amino-acid chain; its full sequence is Lipopolysaccharide export system protein LptA (172 aa).

The signal sequence occupies residues 1 to 23 (MKLVSNKILFLATMVLASSSAFA).

Belongs to the LptA family. In terms of assembly, component of the lipopolysaccharide transport and assembly complex.

It is found in the periplasm. Functionally, involved in the assembly of lipopolysaccharide (LPS). Required for the translocation of LPS from the inner membrane to the outer membrane. May form a bridge between the inner membrane and the outer membrane, via interactions with LptC and LptD, thereby facilitating LPS transfer across the periplasm. This is Lipopolysaccharide export system protein LptA from Haemophilus influenzae (strain ATCC 51907 / DSM 11121 / KW20 / Rd).